A 312-amino-acid polypeptide reads, in one-letter code: Serine/threonine-protein phosphatase PP1 isozyme 2 (312 aa).

N-acetylalanine is present on Ala2. 4 residues coordinate Mn(2+): Asp70, His72, Asp98, and Asn130. The active-site Proton donor is His131. Mn(2+) contacts are provided by His179 and His254.

It belongs to the PPP phosphatase family. PP-1 subfamily. As to quaternary structure, interacts with SRK2D/SNRK2.2 and SRK2E/SNRK2.6. Requires Mn(2+) as cofactor.

It is found in the nucleus. The protein localises to the cytoplasm. The catalysed reaction is O-phospho-L-seryl-[protein] + H2O = L-seryl-[protein] + phosphate. The enzyme catalyses O-phospho-L-threonyl-[protein] + H2O = L-threonyl-[protein] + phosphate. Phosphatase activity is strongly reduced by the protein phosphatase inhibitor 2 (I-2). Serine/threonine-protein phosphatase that possesses phosphatase activity toward para-nitrophenyl phosphate (pNPP) in vitro. In Arabidopsis thaliana (Mouse-ear cress), this protein is Serine/threonine-protein phosphatase PP1 isozyme 2.